The chain runs to 82 residues: Protein MGF 110-5L (82 aa).

The first 28 residues, 1–28, serve as a signal peptide directing secretion; it reads MLVIFLGILGLLANQVSSQLVGQLHPTE. The N-linked (GlcNAc...) asparagine; by host glycan is linked to Asn62.

It belongs to the asfivirus MGF 110 family.

In terms of biological role, plays a role in virus cell tropism, and may be required for efficient virus replication in macrophages. The protein is Protein MGF 110-5L of Ornithodoros (relapsing fever ticks).